We begin with the raw amino-acid sequence, 229 residues long: Potassium/proton antiporter CemA (229 aa).

Helical transmembrane passes span 7–27, 106–126, 154–174, and 189–209; these read FIPF…YLSF, MILH…YSIL, ILLV…ELLI, and IISS…KYWI.

This sequence belongs to the CemA family.

The protein localises to the plastid. The protein resides in the chloroplast inner membrane. It catalyses the reaction K(+)(in) + H(+)(out) = K(+)(out) + H(+)(in). Functionally, contributes to K(+)/H(+) antiport activity by supporting proton efflux to control proton extrusion and homeostasis in chloroplasts in a light-dependent manner to modulate photosynthesis. Prevents excessive induction of non-photochemical quenching (NPQ) under continuous-light conditions. Indirectly promotes efficient inorganic carbon uptake into chloroplasts. The polypeptide is Potassium/proton antiporter CemA (Spinacia oleracea (Spinach)).